The primary structure comprises 366 residues: uncharacterized protein (366 aa).

This sequence to B.subtilis XkdV.

This is an uncharacterized protein from Bacillus subtilis (strain 168).